The sequence spans 156 residues: MCHSRSCHPTMTILQAPTPAPSTIPGPRRGSGPEIFTFDPLPEPAAAPAGRPSASRGHRKRSRRVLYPRVVRRQLPVEEPNPAKRLLFLLLTIVFCQILMAEEGVPAPLPPEDAPNAASLAPTPVSAVLEPFNLTSEPSDYALDLSTFLQQHPAAF.

Residues 1-62 (MCHSRSCHPT…SASRGHRKRS (62 aa)) are disordered. Residues 1 to 82 (MCHSRSCHPT…RQLPVEEPNP (82 aa)) lie on the Cytoplasmic side of the membrane. Position 18 is a phosphothreonine; by MAPK1 (Thr18). At Ser31 the chain carries Phosphoserine. The span at 44-55 (PAAAPAGRPSAS) shows a compositional bias: low complexity. The helical; Signal-anchor for type II membrane protein transmembrane segment at 83-99 (AKRLLFLLLTIVFCQIL) threads the bilayer. Topologically, residues 100–156 (MAEEGVPAPLPPEDAPNAASLAPTPVSAVLEPFNLTSEPSDYALDLSTFLQQHPAAF) are extracellular. Thr123 bears the Phosphothreonine; by MAPK1 mark. Phosphoserine; by MAPK1 is present on Ser126. Asn133 carries an N-linked (GlcNAc...) asparagine glycan.

This sequence belongs to the IER3 family. In terms of assembly, interacts with the PPP2R5C-PP2A holoenzyme and ERK kinases; regulates ERK dephosphorylation. Phosphorylated at Thr-18, Thr-123 and Ser-126 by MAPK1/ERK2 and probably MAPK3/ERK1. Upon phosphorylation by MAPK1/ERK2 and MAPK3/ERK1, acquires the ability to inhibit cell death induced by various stimuli. Post-translationally, glycosylated.

The protein resides in the membrane. Its function is as follows. May play a role in the ERK signaling pathway by inhibiting the dephosphorylation of ERK by phosphatase PP2A-PPP2R5C holoenzyme. Also acts as an ERK downstream effector mediating survival. As a member of the NUPR1/RELB/IER3 survival pathway, may provide pancreatic ductal adenocarcinoma with remarkable resistance to cell stress, such as starvation or gemcitabine treatment. The sequence is that of Radiation-inducible immediate-early gene IEX-1 (IER3) from Homo sapiens (Human).